Here is a 487-residue protein sequence, read N- to C-terminus: DNA ligase (487 aa).

The active-site N6-AMP-lysine intermediate is lysine 159. ATP contacts are provided by arginine 164, arginine 182, and glutamate 217. Glutamate 217 provides a ligand contact to a divalent metal cation. The tract at residues 229–237 (EGLDFLFDA) is interaction with the sliding clamp. Glutamate 344 lines the a divalent metal cation pocket. Residues arginine 359 and lysine 365 each contribute to the ATP site.

Belongs to the ATP-dependent DNA ligase family. As to quaternary structure, interacts with the sliding clamp. It depends on a divalent metal cation as a cofactor.

The catalysed reaction is ATP + (deoxyribonucleotide)n-3'-hydroxyl + 5'-phospho-(deoxyribonucleotide)m = (deoxyribonucleotide)n+m + AMP + diphosphate.. In terms of biological role, DNA ligase, which is expressed in the early stage of lytic development, has been implicated in T4 DNA synthesis and genetic recombination. It may also play a role in T4 DNA repair. The sequence is that of DNA ligase (30) from Escherichia coli (Bacteriophage T6).